A 100-amino-acid polypeptide reads, in one-letter code: MAKKSMIARDVKRKKTVERYAAKRAALMAAFNAAEDPMDRLEIHRKIQALPRNSARIRVRNRCWATGKPRGVYRDFGLCRNQLRERAHKGELPGVVKSSW.

Belongs to the universal ribosomal protein uS14 family. In terms of assembly, part of the 30S ribosomal subunit. Contacts proteins S3 and S10.

Functionally, binds 16S rRNA, required for the assembly of 30S particles and may also be responsible for determining the conformation of the 16S rRNA at the A site. This chain is Small ribosomal subunit protein uS14, found in Synechococcus sp. (strain CC9605).